The sequence spans 238 residues: Cysteine-rich venom protein 1 (238 aa).

Residues 1-19 form the signal peptide; that stretch reads MIAFIVLLSLAAVLQQSSG. The region spanning 38 to 164 is the SCP domain; it reads VDKHNALRRS…STKYLYVCQY (127 aa). 8 disulfide bridges follow: Cys-75-Cys-153, Cys-92-Cys-165, Cys-148-Cys-162, Cys-184-Cys-191, Cys-187-Cys-196, Cys-200-Cys-233, Cys-209-Cys-227, and Cys-218-Cys-231. Positions 200 to 233 constitute a ShKT domain; the sequence is CEYEDTFSNCKALAKKTKCKTEWIKSKCPATCFC.

The protein belongs to the CRISP family. As to expression, expressed by the venom gland.

It is found in the secreted. In terms of biological role, blocks contraction of smooth muscle elicited by high potassium-induced depolarization, but does not block caffeine-stimulated contraction. May target voltage-gated calcium channels on smooth muscle. The sequence is that of Cysteine-rich venom protein 1 from Hydrophis hardwickii (Hardwick's spine-bellied seasnake).